Reading from the N-terminus, the 239-residue chain is MGRGKVVLQRIENKISRQVTFAKRRNGLLKKAYELSILCDAEVALVLFSHAGRLYQFSSSSNMLKTLERYQRYIYASQDAAAPTSDEMQNNYQEYVNLKAHVEILQQSQRNLLGEDLAPLATNELEQLESQVVRTLKQIRSRKTQVLLDELCDLKRKEQMLQDANRVLKRKLDEIDVEAAPPQPPWNGNCSNGHGGGGGVFSSEPPQPEHFFQALGLHAVDVNQPPAPPPGGYPPEWMA.

The 61-residue stretch at 1 to 61 (MGRGKVVLQR…GRLYQFSSSS (61 aa)) folds into the MADS-box domain. Positions 88-178 (MQNNYQEYVN…KRKLDEIDVE (91 aa)) constitute a K-box domain. The interval 179-208 (AAPPQPPWNGNCSNGHGGGGGVFSSEPPQP) is disordered.

In terms of tissue distribution, highly expressed in leaves and at low levels in roots and spikelets (rice flower).

The protein localises to the nucleus. In terms of biological role, probable transcription factor. The chain is MADS-box transcription factor 34 (MADS34) from Oryza sativa subsp. japonica (Rice).